Consider the following 308-residue polypeptide: uncharacterized protein (308 aa).

A signal peptide spans 1-28; it reads MILMKKFEIILFLFIAVLIFVFGYFVGA.

This is an uncharacterized protein from Methanocaldococcus jannaschii (strain ATCC 43067 / DSM 2661 / JAL-1 / JCM 10045 / NBRC 100440) (Methanococcus jannaschii).